The following is a 741-amino-acid chain: Phosphoribosylformylglycinamidine synthase subunit PurL (741 aa).

His-53 is a catalytic residue. ATP contacts are provided by Tyr-56 and Lys-95. Position 97 (Glu-97) interacts with Mg(2+). Substrate contacts are provided by residues 98 to 101 and Arg-120; that span reads SHNH. His-99 acts as the Proton acceptor in catalysis. Asp-121 is a binding site for Mg(2+). Residue Gln-244 coordinates substrate. Asp-274 is a binding site for Mg(2+). 318–320 lines the substrate pocket; that stretch reads ESQ. ATP is bound by residues Asp-501 and Gly-538. Asn-539 contributes to the Mg(2+) binding site. Ser-541 is a binding site for substrate.

It belongs to the FGAMS family. In terms of assembly, monomer. Part of the FGAM synthase complex composed of 1 PurL, 1 PurQ and 2 PurS subunits.

The protein localises to the cytoplasm. The enzyme catalyses N(2)-formyl-N(1)-(5-phospho-beta-D-ribosyl)glycinamide + L-glutamine + ATP + H2O = 2-formamido-N(1)-(5-O-phospho-beta-D-ribosyl)acetamidine + L-glutamate + ADP + phosphate + H(+). It participates in purine metabolism; IMP biosynthesis via de novo pathway; 5-amino-1-(5-phospho-D-ribosyl)imidazole from N(2)-formyl-N(1)-(5-phospho-D-ribosyl)glycinamide: step 1/2. In terms of biological role, part of the phosphoribosylformylglycinamidine synthase complex involved in the purines biosynthetic pathway. Catalyzes the ATP-dependent conversion of formylglycinamide ribonucleotide (FGAR) and glutamine to yield formylglycinamidine ribonucleotide (FGAM) and glutamate. The FGAM synthase complex is composed of three subunits. PurQ produces an ammonia molecule by converting glutamine to glutamate. PurL transfers the ammonia molecule to FGAR to form FGAM in an ATP-dependent manner. PurS interacts with PurQ and PurL and is thought to assist in the transfer of the ammonia molecule from PurQ to PurL. In Latilactobacillus sakei subsp. sakei (strain 23K) (Lactobacillus sakei subsp. sakei), this protein is Phosphoribosylformylglycinamidine synthase subunit PurL.